We begin with the raw amino-acid sequence, 120 residues long: Small ribosomal subunit protein uS13 (120 aa).

A disordered region spans residues 94–120 (GLPLRGQRTRTNARTRKGPRKAIAGKK).

It belongs to the universal ribosomal protein uS13 family. Part of the 30S ribosomal subunit. Forms a loose heterodimer with protein S19. Forms two bridges to the 50S subunit in the 70S ribosome.

Located at the top of the head of the 30S subunit, it contacts several helices of the 16S rRNA. In the 70S ribosome it contacts the 23S rRNA (bridge B1a) and protein L5 of the 50S subunit (bridge B1b), connecting the 2 subunits; these bridges are implicated in subunit movement. Contacts the tRNAs in the A and P-sites. This chain is Small ribosomal subunit protein uS13, found in Azoarcus sp. (strain BH72).